A 432-amino-acid chain; its full sequence is 5'-deoxyadenosine deaminase (432 aa).

Positions 63 and 65 each coordinate Zn(2+). Glu-92 and His-184 together coordinate substrate. His-211 contacts Zn(2+). Glu-214 and Asp-299 together coordinate substrate. Asp-299 is a binding site for Zn(2+).

The protein belongs to the metallo-dependent hydrolases superfamily. MTA/SAH deaminase family. In terms of assembly, homotetramer. It depends on Zn(2+) as a cofactor.

The enzyme catalyses 5'-deoxyadenosine + H2O + H(+) = 5'-deoxyinosine + NH4(+). It catalyses the reaction S-adenosyl-L-homocysteine + H2O + H(+) = S-inosyl-L-homocysteine + NH4(+). It carries out the reaction S-methyl-5'-thioadenosine + H2O + H(+) = S-methyl-5'-thioinosine + NH4(+). The catalysed reaction is adenosine + H2O + H(+) = inosine + NH4(+). Its pathway is amino-acid biosynthesis; S-adenosyl-L-methionine biosynthesis. Functionally, catalyzes the deamination of three SAM-derived enzymatic products, namely 5'-deoxyadenosine, S-adenosyl-L-homocysteine, and 5'-methylthioadenosine, to produce the inosine analogs. Can also deaminate adenosine. The preferred substrate for this enzyme is 5'-deoxyadenosine, but all these substrates are efficiently deaminated. Likely functions in a S-adenosyl-L-methionine (SAM) recycling pathway from S-adenosyl-L-homocysteine (SAH) produced from SAM-dependent methylation reactions. May also be involved in the recycling of 5'-deoxyadenosine, whereupon the 5'-deoxyribose moiety of 5'-deoxyinosine is further metabolized to deoxyhexoses used for the biosynthesis of aromatic amino acids in methanogens. The sequence is that of 5'-deoxyadenosine deaminase from Methanosarcina acetivorans (strain ATCC 35395 / DSM 2834 / JCM 12185 / C2A).